Consider the following 251-residue polypeptide: Imidazole glycerol phosphate synthase subunit HisF (251 aa).

Catalysis depends on residues Asp12 and Asp131.

It belongs to the HisA/HisF family. In terms of assembly, heterodimer of HisH and HisF.

The protein resides in the cytoplasm. It carries out the reaction 5-[(5-phospho-1-deoxy-D-ribulos-1-ylimino)methylamino]-1-(5-phospho-beta-D-ribosyl)imidazole-4-carboxamide + L-glutamine = D-erythro-1-(imidazol-4-yl)glycerol 3-phosphate + 5-amino-1-(5-phospho-beta-D-ribosyl)imidazole-4-carboxamide + L-glutamate + H(+). The protein operates within amino-acid biosynthesis; L-histidine biosynthesis; L-histidine from 5-phospho-alpha-D-ribose 1-diphosphate: step 5/9. Its function is as follows. IGPS catalyzes the conversion of PRFAR and glutamine to IGP, AICAR and glutamate. The HisF subunit catalyzes the cyclization activity that produces IGP and AICAR from PRFAR using the ammonia provided by the HisH subunit. This is Imidazole glycerol phosphate synthase subunit HisF from Streptomyces avermitilis (strain ATCC 31267 / DSM 46492 / JCM 5070 / NBRC 14893 / NCIMB 12804 / NRRL 8165 / MA-4680).